Consider the following 209-residue polypeptide: Uracil phosphoribosyltransferase (209 aa).

5-phospho-alpha-D-ribose 1-diphosphate is bound by residues R79, R104, and 131–139; that span reads DPMLATGGS. Uracil-binding positions include I194 and 199 to 201; that span reads GDA. Residue D200 coordinates 5-phospho-alpha-D-ribose 1-diphosphate.

It belongs to the UPRTase family. The cofactor is Mg(2+).

The enzyme catalyses UMP + diphosphate = 5-phospho-alpha-D-ribose 1-diphosphate + uracil. It functions in the pathway pyrimidine metabolism; UMP biosynthesis via salvage pathway; UMP from uracil: step 1/1. Allosterically activated by GTP. Its function is as follows. Catalyzes the conversion of uracil and 5-phospho-alpha-D-ribose 1-diphosphate (PRPP) to UMP and diphosphate. The polypeptide is Uracil phosphoribosyltransferase (Agathobacter rectalis (strain ATCC 33656 / DSM 3377 / JCM 17463 / KCTC 5835 / VPI 0990) (Eubacterium rectale)).